A 197-amino-acid chain; its full sequence is Small ribosomal subunit protein uS4c (197 aa).

An S4 RNA-binding domain is found at 85-157; it reads MRLDNILFRL…LQLFTGKELA (73 aa).

It belongs to the universal ribosomal protein uS4 family. In terms of assembly, part of the 30S ribosomal subunit. Contacts protein S5. The interaction surface between S4 and S5 is involved in control of translational fidelity.

It localises to the plastid. One of the primary rRNA binding proteins, it binds directly to 16S rRNA where it nucleates assembly of the body of the 30S subunit. In terms of biological role, with S5 and S12 plays an important role in translational accuracy. The protein is Small ribosomal subunit protein uS4c (rps4) of Cuscuta gronovii (Common dodder).